A 100-amino-acid chain; its full sequence is NAD(P)H-quinone oxidoreductase subunit 4L, chloroplastic (100 aa).

3 consecutive transmembrane segments (helical) span residues Met-1–Ile-21, Ile-27–Phe-47, and Phe-61–Phe-81.

Belongs to the complex I subunit 4L family. In terms of assembly, NDH is composed of at least 16 different subunits, 5 of which are encoded in the nucleus.

Its subcellular location is the plastid. The protein resides in the chloroplast thylakoid membrane. It catalyses the reaction a plastoquinone + NADH + (n+1) H(+)(in) = a plastoquinol + NAD(+) + n H(+)(out). The enzyme catalyses a plastoquinone + NADPH + (n+1) H(+)(in) = a plastoquinol + NADP(+) + n H(+)(out). NDH shuttles electrons from NAD(P)H:plastoquinone, via FMN and iron-sulfur (Fe-S) centers, to quinones in the photosynthetic chain and possibly in a chloroplast respiratory chain. The immediate electron acceptor for the enzyme in this species is believed to be plastoquinone. Couples the redox reaction to proton translocation, and thus conserves the redox energy in a proton gradient. This chain is NAD(P)H-quinone oxidoreductase subunit 4L, chloroplastic, found in Chaetosphaeridium globosum (Charophycean green alga).